We begin with the raw amino-acid sequence, 418 residues long: Adenylosuccinate synthetase 2 (418 aa).

Residues 12–18 (GDEGKGR) and 40–42 (GHT) each bind GTP. The Proton acceptor role is filled by Asp-13. Residues Asp-13 and Gly-40 each contribute to the Mg(2+) site. IMP is bound by residues 13-16 (DEGK), 38-41 (NAGH), Thr-127, Lys-141, Thr-239, and Arg-301. The active-site Proton donor is His-41. Position 297-303 (297-303 (AVTGRPR)) interacts with substrate. GTP-binding positions include Arg-303, 329–331 (KID), and 407–409 (SVG).

The protein belongs to the adenylosuccinate synthetase family. In terms of assembly, homodimer. The cofactor is Mg(2+).

The protein localises to the cytoplasm. It catalyses the reaction IMP + L-aspartate + GTP = N(6)-(1,2-dicarboxyethyl)-AMP + GDP + phosphate + 2 H(+). It participates in purine metabolism; AMP biosynthesis via de novo pathway; AMP from IMP: step 1/2. Its function is as follows. Plays an important role in the de novo pathway of purine nucleotide biosynthesis. Catalyzes the first committed step in the biosynthesis of AMP from IMP. This is Adenylosuccinate synthetase 2 from Pseudoalteromonas translucida (strain TAC 125).